Here is an 877-residue protein sequence, read N- to C-terminus: Clumping factor B (877 aa).

Residues 1–44 (MKKRIDYLSNKQNKYSIRRFTVGTTSVIVGATILFGIGNHQAQA) form the signal peptide. A YSIRK-G/S signaling motif motif is present at residues 15–26 (YSIRRFTVGTTS). Composition is skewed to polar residues over residues 44–61 (ASEQSNDTTQSSKNNASA) and 68–95 (MIETPQLNTTANDTSDISANTNSANVDS). The interval 44–192 (ASEQSNDTTQ…QGTSKPSVRT (149 aa)) is disordered. The interval 45-542 (SEQSNDTTQS…GSADGDSAVN (498 aa)) is ligand binding A region. Residues 96-119 (TTKPMSTQTSNTTTTEPASTNETP) are compositionally biased toward low complexity. A compositionally biased stretch (polar residues) spans 120 to 189 (QPTAIKNQAT…SNAQGTSKPS (70 aa)). Residues 272-276 (DYSNS) carry the MIDAS-like motif motif. Residues 530 to 849 (YGGGSADGDS…ETGDKSENTN (320 aa)) are disordered. Over residues 545 to 555 (DPTPGPPVDPE) the composition is skewed to pro residues. Acidic residues predominate over residues 556 to 801 (PSPDPEPEPT…SDSDSDSDSD (246 aa)). Residues 805–816 (RVTPPNNEQKAP) show a composition bias toward polar residues. The span at 833-846 (HKTDALPETGDKSE) shows a compositional bias: basic and acidic residues. The short motif at 838 to 842 (LPETG) is the LPXTG sorting signal element. Thr841 carries the pentaglycyl murein peptidoglycan amidated threonine modification. Positions 842–877 (GDKSENTNATLFGAMMALLGSLLLFRKRKQDHKEKA) are cleaved as a propeptide — removed by sortase.

This sequence belongs to the serine-aspartate repeat-containing protein (SDr) family. Post-translationally, proteolytically cleaved by aureolysin (aur). This cleavage leads to the inactivation of ClfB.

The protein resides in the secreted. It is found in the cell wall. In terms of biological role, cell surface-associated protein implicated in virulence by promoting bacterial attachment to both alpha- and beta-chains of human fibrinogen and inducing the formation of bacterial clumps. Partly responsible for mediating bacterial attachment to the highly keratinized squamous epithelial cells from the nasal cavity via an interaction with cytokeratin K10 (K10). Also promotes bacterial attachment to cultured keratinocytes, possibly through an interaction with cytokeratin K10. Binds mouse cytokeratin K10. Activates human platelet aggregation. The chain is Clumping factor B (clfB) from Staphylococcus aureus (strain NCTC 8325 / PS 47).